Reading from the N-terminus, the 119-residue chain is Ribonuclease P protein component (119 aa).

It belongs to the RnpA family. As to quaternary structure, consists of a catalytic RNA component (M1 or rnpB) and a protein subunit.

The catalysed reaction is Endonucleolytic cleavage of RNA, removing 5'-extranucleotides from tRNA precursor.. Functionally, RNaseP catalyzes the removal of the 5'-leader sequence from pre-tRNA to produce the mature 5'-terminus. It can also cleave other RNA substrates such as 4.5S RNA. The protein component plays an auxiliary but essential role in vivo by binding to the 5'-leader sequence and broadening the substrate specificity of the ribozyme. The sequence is that of Ribonuclease P protein component from Syntrophus aciditrophicus (strain SB).